Here is a 941-residue protein sequence, read N- to C-terminus: Protocadherin alpha-12 (941 aa).

A signal peptide spans 1-29; sequence MVIIGPRGPGSQRLLLSLLLLAAWEVGSG. Cadherin domains are found at residues 30-133, 134-242, 243-350, 351-455, 456-565, and 581-678; these read QLHY…PPVF, RERE…GPAF, DKPS…VPEV, MVTS…APAF, AQPE…APAL, and VPRS…APKT. Topologically, residues 30–697 are extracellular; the sequence is QLHYSVYEEA…DPEAALVDIN (668 aa). N-linked (GlcNAc...) asparagine glycans are attached at residues Asn-257 and Asn-265. Residue Asn-548 is glycosylated (N-linked (GlcNAc...) asparagine). A helical membrane pass occupies residues 698–718; it reads VYLIIAICAVSSLLVLTLLLY. Residues 719-941 are Cytoplasmic-facing; it reads TALRCSAPPT…GNSTTDNSDQ (223 aa). 5 PXXP repeats span residues 734–737, 790–793, 823–826, 863–866, and 882–885; these read PGKP, PRQP, PGGP, GPGN, and PGSP. A 5 X 4 AA repeats of P-X-X-P region spans residues 734-885; the sequence is PGKPTLVCSS…PDKFIIPGSP (152 aa). Residues 818–941 form a disordered region; the sequence is ILRAGPGGPD…GNSTTDNSDQ (124 aa). Residues 900 to 914 show a composition bias toward basic and acidic residues; it reads DKSDFITFGKKEETK.

The protein localises to the cell membrane. Functionally, potential calcium-dependent cell-adhesion protein. May be involved in the establishment and maintenance of specific neuronal connections in the brain. This is Protocadherin alpha-12 (PCDHA12) from Pan troglodytes (Chimpanzee).